The chain runs to 123 residues: Ribonuclease P protein component (123 aa).

The protein belongs to the RnpA family. Consists of a catalytic RNA component (M1 or rnpB) and a protein subunit.

The catalysed reaction is Endonucleolytic cleavage of RNA, removing 5'-extranucleotides from tRNA precursor.. In terms of biological role, RNaseP catalyzes the removal of the 5'-leader sequence from pre-tRNA to produce the mature 5'-terminus. It can also cleave other RNA substrates such as 4.5S RNA. The protein component plays an auxiliary but essential role in vivo by binding to the 5'-leader sequence and broadening the substrate specificity of the ribozyme. The protein is Ribonuclease P protein component of Bordetella bronchiseptica (strain ATCC BAA-588 / NCTC 13252 / RB50) (Alcaligenes bronchisepticus).